The following is a 93-amino-acid chain: MADRVRARIVVSGRVQGVAFRQSAADEGRRLGVKGWVRNLPDGRVEAEVEGERAAVGALVRWCHAGPPAARVDGVEVEWVDPAGDLGAFEIRF.

Positions 6–93 (RARIVVSGRV…GDLGAFEIRF (88 aa)) constitute an Acylphosphatase-like domain. Catalysis depends on residues Arg21 and Asn39.

The protein belongs to the acylphosphatase family.

It catalyses the reaction an acyl phosphate + H2O = a carboxylate + phosphate + H(+). The protein is Acylphosphatase (acyP) of Anaeromyxobacter dehalogenans (strain 2CP-C).